The following is a 213-amino-acid chain: Orotate phosphoribosyltransferase (213 aa).

5-phospho-alpha-D-ribose 1-diphosphate is bound at residue K26. 34 to 35 (FF) is an orotate binding site. 5-phospho-alpha-D-ribose 1-diphosphate contacts are provided by residues 72–73 (YK), R99, K100, K103, H105, and 124–132 (DDVITAGTA). Residues T128 and R156 each contribute to the orotate site.

The protein belongs to the purine/pyrimidine phosphoribosyltransferase family. PyrE subfamily. Homodimer. Requires Mg(2+) as cofactor.

The enzyme catalyses orotidine 5'-phosphate + diphosphate = orotate + 5-phospho-alpha-D-ribose 1-diphosphate. The protein operates within pyrimidine metabolism; UMP biosynthesis via de novo pathway; UMP from orotate: step 1/2. Catalyzes the transfer of a ribosyl phosphate group from 5-phosphoribose 1-diphosphate to orotate, leading to the formation of orotidine monophosphate (OMP). In Escherichia coli O45:K1 (strain S88 / ExPEC), this protein is Orotate phosphoribosyltransferase.